Consider the following 255-residue polypeptide: 1-(5-phosphoribosyl)-5-[(5-phosphoribosylamino)methylideneamino] imidazole-4-carboxamide isomerase (255 aa).

Asp-8 serves as the catalytic Proton acceptor. Residue Asp-129 is the Proton donor of the active site.

This sequence belongs to the HisA/HisF family.

The protein localises to the cytoplasm. The enzyme catalyses 1-(5-phospho-beta-D-ribosyl)-5-[(5-phospho-beta-D-ribosylamino)methylideneamino]imidazole-4-carboxamide = 5-[(5-phospho-1-deoxy-D-ribulos-1-ylimino)methylamino]-1-(5-phospho-beta-D-ribosyl)imidazole-4-carboxamide. Its pathway is amino-acid biosynthesis; L-histidine biosynthesis; L-histidine from 5-phospho-alpha-D-ribose 1-diphosphate: step 4/9. The polypeptide is 1-(5-phosphoribosyl)-5-[(5-phosphoribosylamino)methylideneamino] imidazole-4-carboxamide isomerase (Synechococcus sp. (strain CC9605)).